Consider the following 445-residue polypeptide: E3 ubiquitin-protein ligase pellino homolog 3 (445 aa).

Residues 1–24 (MVLEGNPDVGSPRTSDLQHPGSQG) are disordered. Serine 11 is subject to Phosphoserine. Polar residues predominate over residues 12–24 (PRTSDLQHPGSQG).

This sequence belongs to the pellino family. As to quaternary structure, interacts with TRAF6, MAP3K14 and MAP3K7. In terms of processing, phosphorylated by IRAK1 enhancing its E3 ligase activity.

The enzyme catalyses S-ubiquitinyl-[E2 ubiquitin-conjugating enzyme]-L-cysteine + [acceptor protein]-L-lysine = [E2 ubiquitin-conjugating enzyme]-L-cysteine + N(6)-ubiquitinyl-[acceptor protein]-L-lysine.. Its pathway is protein modification; protein ubiquitination. In terms of biological role, E3 ubiquitin ligase catalyzing the covalent attachment of ubiquitin moieties onto substrate proteins. Involved in the TLR and IL-1 signaling pathways via interaction with the complex containing IRAK kinases and TRAF6. Mediates 'Lys-63'-linked polyubiquitination of IRAK1. Can activate AP1/JUN and ELK1. Acts as a regulator of innate immunity by mediating 'Lys-63'-linked polyubiquitination of RIPK2 downstream of NOD1 and NOD2, thereby transforming RIPK2 into a scaffolding protein for downstream effectors, ultimately leading to activation of the NF-kappa-B and MAP kinases signaling. Catalyzes 'Lys-63'-linked polyubiquitination of RIPK2 in parallel of XIAP. In Mus musculus (Mouse), this protein is E3 ubiquitin-protein ligase pellino homolog 3.